A 618-amino-acid chain; its full sequence is Transport protein particle subunit trs85-2 (618 aa).

This sequence belongs to the TRS85 family. In terms of assembly, part of the multisubunit TRAPP (transport protein particle) complexes I and II.

It localises to the golgi apparatus. It is found in the cis-Golgi network. Component of the TRAPP I and TRAPP II complexes. TRAPP I plays a key role in the late stages of endoplasmic reticulum to Golgi traffic. TRAPP II seems to play a role in intra-Golgi transport. Has a role late in meiosis following DNA replication. The chain is Transport protein particle subunit trs85-2 (trs85-2) from Schizosaccharomyces pombe (strain 972 / ATCC 24843) (Fission yeast).